Consider the following 101-residue polypeptide: Small ribosomal subunit protein uS14 (101 aa).

The protein belongs to the universal ribosomal protein uS14 family. As to quaternary structure, part of the 30S ribosomal subunit. Contacts proteins S3 and S10.

Its function is as follows. Binds 16S rRNA, required for the assembly of 30S particles and may also be responsible for determining the conformation of the 16S rRNA at the A site. The chain is Small ribosomal subunit protein uS14 from Salmonella schwarzengrund (strain CVM19633).